The following is a 272-amino-acid chain: D-aminoacyl-tRNA deacylase (272 aa).

The protein belongs to the DtdA deacylase family. In terms of assembly, monomer. It depends on Zn(2+) as a cofactor.

It catalyses the reaction a D-aminoacyl-tRNA + H2O = a tRNA + a D-alpha-amino acid + H(+). The catalysed reaction is glycyl-tRNA(Ala) + H2O = tRNA(Ala) + glycine + H(+). Its function is as follows. D-aminoacyl-tRNA deacylase with broad substrate specificity. By recycling D-aminoacyl-tRNA to D-amino acids and free tRNA molecules, this enzyme counteracts the toxicity associated with the formation of D-aminoacyl-tRNA entities in vivo. This Desulfurococcus amylolyticus (strain DSM 18924 / JCM 16383 / VKM B-2413 / 1221n) (Desulfurococcus kamchatkensis) protein is D-aminoacyl-tRNA deacylase.